The following is a 238-amino-acid chain: Sugar fermentation stimulation protein homolog (238 aa).

Belongs to the SfsA family.

This is Sugar fermentation stimulation protein homolog from Actinobacillus succinogenes (strain ATCC 55618 / DSM 22257 / CCUG 43843 / 130Z).